A 180-amino-acid polypeptide reads, in one-letter code: Segregation and condensation protein B (180 aa).

It belongs to the ScpB family. As to quaternary structure, homodimer. Homodimerization may be required to stabilize the binding of ScpA to the Smc head domains. Component of a cohesin-like complex composed of ScpA, ScpB and the Smc homodimer, in which ScpA and ScpB bind to the head domain of Smc. The presence of the three proteins is required for the association of the complex with DNA.

Its subcellular location is the cytoplasm. Participates in chromosomal partition during cell division. May act via the formation of a condensin-like complex containing Smc and ScpA that pull DNA away from mid-cell into both cell halves. The polypeptide is Segregation and condensation protein B (Staphylococcus aureus (strain MSSA476)).